Here is a 482-residue protein sequence, read N- to C-terminus: Histone deacetylase 1 (482 aa).

The histone deacetylase stretch occupies residues 9 to 321 (RKVCYYYDGD…WTYETAVALD (313 aa)). Residues G27 and K31 each coordinate 1D-myo-inositol 1,4,5,6-tetrakisphosphate. The residue at position 74 (K74) is an N6-acetyllysine; alternate. K74 is covalently cross-linked (Glycyl lysine isopeptide (Lys-Gly) (interchain with G-Cter in SUMO2); alternate). H141 is a catalytic residue. D176 and H178 together coordinate Zn(2+). K220 is subject to N6-acetyllysine. Residue C261 is modified to S-nitrosocysteine. D264 serves as a coordination point for Zn(2+). Residue R270 participates in 1D-myo-inositol 1,4,5,6-tetrakisphosphate binding. Position 273 is an S-nitrosocysteine (C273). Residues 390-400 (PEESGDEDEED) are compositionally biased toward acidic residues. Residues 390–482 (PEESGDEDEE…KGVKEEVKMA (93 aa)) are disordered. S393, S406, S409, S421, and S423 each carry phosphoserine. A compositionally biased stretch (basic and acidic residues) spans 401 to 416 (PDKRISICSSDKRIAC). Acidic residues predominate over residues 417–427 (EEEFSDSDEEG). K432 carries the post-translational modification N6-methylated lysine; by EHMT2. K438 is covalently cross-linked (Glycyl lysine isopeptide (Lys-Gly) (interchain with G-Cter in SUMO2)). Residues 443 to 482 (VKTEDEKEKDPEEKKEVTEEEKTKEEKPEAKGVKEEVKMA) show a composition bias toward basic and acidic residues. A Glycyl lysine isopeptide (Lys-Gly) (interchain with G-Cter in SUMO2); alternate cross-link involves residue K444. K444 participates in a covalent cross-link: Glycyl lysine isopeptide (Lys-Gly) (interchain with G-Cter in SUMO); alternate. Glycyl lysine isopeptide (Lys-Gly) (interchain with G-Cter in SUMO2) cross-links involve residues K456, K457, and K473. K476 is covalently cross-linked (Glycyl lysine isopeptide (Lys-Gly) (interchain with G-Cter in SUMO2); alternate). K476 is covalently cross-linked (Glycyl lysine isopeptide (Lys-Gly) (interchain with G-Cter in SUMO); alternate). K480 participates in a covalent cross-link: Glycyl lysine isopeptide (Lys-Gly) (interchain with G-Cter in SUMO2).

It belongs to the histone deacetylase family. HD type 1 subfamily. Part of the core histone deacetylase (HDAC) complex composed of HDAC1, HDAC2, RBBP4 and RBBP7, the core complex associates with SIN3, SAP18 and SAP30 to form the SIN3 HDAC complex. Component of the nucleosome remodeling and deacetylase (NuRD) repressor complex, composed of core proteins MTA1, MTA2, MTA3, RBBP4, RBBP7, HDAC1, HDAC2, MBD2, MBD3, and peripherally associated proteins CDK2AP1, CDK2AP2, GATAD2A, GATAD2B, CHD3, CHD4 and CHD5. The exact stoichiometry of the NuRD complex is unknown, and some subunits such as MBD2 and MBD3, GATAD2A and GATAD2B, and CHD3, CHD4 and CHD5 define mutually exclusive NuRD complexes. Component of a BHC histone deacetylase complex that contains HDAC1, HDAC2, HMG20B/BRAF35, KDM1A, RCOR1/CoREST and PHF21A/BHC80. The BHC complex may also contain ZMYM2, ZNF217, ZMYM3, GSE1 and GTF2I. Component of a mSin3A corepressor complex that contains SIN3A, SAP130, SUDS3/SAP45, ARID4B/SAP180, HDAC1 and HDAC2. Found in a trimeric complex with APBB1 and TSHZ3; the interaction between HDAC1 and APBB1 is mediated by TSHZ3. Forms a complex comprising APPL1, RUVBL2, APPL2, CTNNB1 and HDAC2. Component of a RCOR/GFI/KDM1A/HDAC complex. Part of a complex composed of TRIM28, HDAC1, HDAC2 and EHMT2. Part of a complex containing at least CDYL, MIER1, MIER2, HDAC1 and HDAC2. The large PER complex involved in the histone deacetylation is composed of at least HDAC1, PER2, SFPQ and SIN3A. Associates with the 9-1-1 complex; interacts with HUS1. Found in a complex with DNMT3A and HDAC7. Found in a complex with YY1, SIN3A and GON4L. Identified in a histone deacetylase complex that contains DNTTIP1, HDAC1 and MIDEAS; this complex assembles into a tetramer that contains four copies of each protein chain. Found in a complex composed of at least SINHCAF, SIN3A, HDAC1, SAP30, RBBP4, OGT and TET1. Component of the SIN3B complex, which includes SIN3B, HDAC1, PHF12 and MORF4L1. Interacts with GFI1; the interaction is direct. Interacts directly with GFI1B. Interacts with TSHZ3 (via N-terminus); the interaction is direct. Interacts with APEX1; the interaction is not dependent on the acetylated status of APEX1. Interacts with BANP. Interacts with BAZ2A/TIP5. Interacts with BCL6. Interacts with BCOR. Interacts with BHLHE40/DEC1. Interacts with BRCC3; this interaction is enhanced in the presence of PWWP2B. Interacts with BRMS1. Interacts with BRMS1L. Interacts with C10orf90/FATS (via its N-terminal); the interaction prevents binding of HDAC1 to CDKN1A/p21 and facilitates the acetylation and stabilization of CDKN1A/p21. Interacts with CBFA2T3. Interacts with CCAR2. Interacts with CDK2AP1. Interacts with CHD3. Interacts with CHD4. Interacts with CHFR. Interacts with CIART. Interacts with CDKN1A/p21. Interacts with CDK5 complexed to CDK5R1 (p25). Interacts with CRY1. Interacts with DAXX. Interacts with DDIT3/CHOP. Interacts with DDX5. Interacts with DHX36; this interaction occurs in a RNA-dependent manner. Interacts with DNMT1. Interacts with DNTTIP1. Interacts with E4F1. Interacts with EP300. Interacts with ERCC6. Interacts with GATAD2A. Interacts with HCFC1. Interacts with HDAC9. Interacts with HUS1. Interacts with INSM1. Interacts with KDM4A. Interacts with KDM5A; this interaction impairs histone deacetylation. Interacts with KDM5B. Interacts with KLF1. Interacts with MBD3L2. Interacts with MIER1. Interacts with NFE4. Interacts with NR4A2/NURR1. Interacts with NR1D2 (via C-terminus). Interacts with NRIP1. Interacts with NSD2. Interacts with PACS2. Interacts with PHB2. Interacts with PPHLN1. Interacts with PRDM6. Interacts with PRDM16. Interacts with PWWP2A in a MTA1-dependent manner. Interacts with PWWP2B. Interacts with RB1. Interacts with RERE. Interacts with SANBR (via the BTB domain). Interacts with SAMSN1. Interacts with SAP30L. Interacts with SETDB1. Interacts with SIN3A. Interacts with SMAD3. Interacts with SMAD4; positively regulated by ZBTB7A. Interacts with SMARCAD1. Interacts with SMARCA4/BRG1. Interacts with SMYD2. Interacts with SMYD4 (via MYND-type zinc finger). Interacts with SP1; the interaction deacetylates SP1 and regulates its transcriptional activity. Interacts with SP3; the interaction deacetylates SP3 and regulates its transcriptional activity. In vitro, C(18) ceramides increase this interaction and the subsequent SP3 deacetylation and SP3-mediated repression of the TERT promoter. Interacts with SPEN/MINT. Interacts with SPHK2. Interacts with SUV39H1. Interacts with TGIF. Interacts with TGIF2. Interacts with TRAF6. Interacts with TRIM28; the interaction recruits HDAC1 to E2F1 and inhibits its acetylation. Interacts with TSC22D3 isoform 1; this interaction affects HDAC1 activity on MYOG promoter and thus inhibits MYOD1 transcriptional activity. Interacts with UHRF1. Interacts with UHRF2. Interacts with ZBTB7A. Interacts with ZMYND8. Interacts with ZMYND15. Interacts with ZNF431. Interacts with ZNF516; this interaction is enhanced in the presence of PWWP2B. Interacts with ZNF541. Interacts with ZNF638. Interacts with ZNHIT1. Interacts with the non-histone region of MACROH2A1. Identified in a complex with HDAC2, KCTD19, DNTTIP1 and ZNF541. Interacts with MSX3. Interacts with VRK1. Requires Zn(2+) as cofactor. In terms of processing, sumoylated on Lys-444 and Lys-476; which promotes enzymatic activity. Desumoylated by SENP1. Phosphorylation on Ser-421 and Ser-423 promotes enzymatic activity and interactions with NuRD and SIN3 complexes. Phosphorylated by CDK5. Post-translationally, ubiquitinated by CHFR and KCTD11, leading to its degradation by the proteasome.

It localises to the nucleus. The catalysed reaction is N(6)-acetyl-L-lysyl-[histone] + H2O = L-lysyl-[histone] + acetate. It catalyses the reaction N(6)-acetyl-L-lysyl-[protein] + H2O = L-lysyl-[protein] + acetate. The enzyme catalyses N(6)-(2E)-butenoyl-L-lysyl-[protein] + H2O = (2E)-2-butenoate + L-lysyl-[protein]. It carries out the reaction N(6)-[(S)-lactoyl]-L-lysyl-[protein] + H2O = (S)-lactate + L-lysyl-[protein]. With respect to regulation, inositol tetraphosphate (1D-myo-inositol 1,4,5,6-tetrakisphosphate) may act as an intermolecular glue between HDAC1 and N-Cor repressor complex components. Histone deacetylase that catalyzes the deacetylation of lysine residues on the N-terminal part of the core histones (H2A, H2B, H3 and H4). Histone deacetylation gives a tag for epigenetic repression and plays an important role in transcriptional regulation, cell cycle progression and developmental events. Histone deacetylases act via the formation of large multiprotein complexes. Acts as a component of the histone deacetylase NuRD complex which participates in the remodeling of chromatin. As part of the SIN3B complex is recruited downstream of the constitutively active genes transcriptional start sites through interaction with histones and mitigates histone acetylation and RNA polymerase II progression within transcribed regions contributing to the regulation of transcription. Also functions as a deacetylase for non-histone targets, such as NR1D2, RELA, SP1, SP3, STAT3 and TSHZ3. Deacetylates SP proteins, SP1 and SP3, and regulates their function. Component of the BRG1-RB1-HDAC1 complex, which negatively regulates the CREST-mediated transcription in resting neurons. Upon calcium stimulation, HDAC1 is released from the complex and CREBBP is recruited, which facilitates transcriptional activation. Deacetylates TSHZ3 and regulates its transcriptional repressor activity. Deacetylates 'Lys-310' in RELA and thereby inhibits the transcriptional activity of NF-kappa-B. Deacetylates NR1D2 and abrogates the effect of KAT5-mediated relieving of NR1D2 transcription repression activity. Component of a RCOR/GFI/KDM1A/HDAC complex that suppresses, via histone deacetylase (HDAC) recruitment, a number of genes implicated in multilineage blood cell development. Involved in CIART-mediated transcriptional repression of the circadian transcriptional activator: CLOCK-BMAL1 heterodimer. Required for the transcriptional repression of circadian target genes, such as PER1, mediated by the large PER complex or CRY1 through histone deacetylation. In addition to protein deacetylase activity, also has protein-lysine deacylase activity: acts as a protein decrotonylase and delactylase by mediating decrotonylation ((2E)-butenoyl) and delactylation (lactoyl) of histones, respectively. This Rattus norvegicus (Rat) protein is Histone deacetylase 1 (Hdac1).